An 86-amino-acid chain; its full sequence is Large ribosomal subunit protein uL23 (86 aa).

Belongs to the universal ribosomal protein uL23 family. Part of the 50S ribosomal subunit. Contacts protein L29.

Functionally, binds to 23S rRNA. One of the proteins that surrounds the polypeptide exit tunnel on the outside of the ribosome. The chain is Large ribosomal subunit protein uL23 from Thermococcus kodakarensis (strain ATCC BAA-918 / JCM 12380 / KOD1) (Pyrococcus kodakaraensis (strain KOD1)).